The following is a 432-amino-acid chain: Enolase (432 aa).

Residue Gln163 coordinates (2R)-2-phosphoglycerate. Glu205 functions as the Proton donor in the catalytic mechanism. Asp242, Glu289, and Asp316 together coordinate Mg(2+). The (2R)-2-phosphoglycerate site is built by Lys341, Arg370, Ser371, and Lys392. The Proton acceptor role is filled by Lys341.

The protein belongs to the enolase family. Mg(2+) serves as cofactor. In terms of processing, probably phosphorylated.

It is found in the cytoplasm. The protein localises to the secreted. The protein resides in the cell surface. The enzyme catalyses (2R)-2-phosphoglycerate = phosphoenolpyruvate + H2O. It participates in carbohydrate degradation; glycolysis; pyruvate from D-glyceraldehyde 3-phosphate: step 4/5. Functionally, catalyzes the reversible conversion of 2-phosphoglycerate (2-PG) into phosphoenolpyruvate (PEP). It is essential for the degradation of carbohydrates via glycolysis. In terms of biological role, 'Moonlights' as a plasminogen receptor. Binds plasminogen and human salivary mucin MG2 when expressed on the bacterial cell surface, potentially allowing the bacterium to acquire surface-associated proteolytic activity that may help the dissemination through oral tissues and entrance into the blood stream. This chain is Enolase, found in Streptococcus mutans serotype c (strain ATCC 700610 / UA159).